A 182-amino-acid chain; its full sequence is Large ribosomal subunit protein bL25 (182 aa).

This sequence belongs to the bacterial ribosomal protein bL25 family. CTC subfamily. As to quaternary structure, part of the 50S ribosomal subunit; part of the 5S rRNA/L5/L18/L25 subcomplex. Contacts the 5S rRNA. Binds to the 5S rRNA independently of L5 and L18.

Functionally, this is one of the proteins that binds to the 5S RNA in the ribosome where it forms part of the central protuberance. The chain is Large ribosomal subunit protein bL25 from Borreliella burgdorferi (strain ATCC 35210 / DSM 4680 / CIP 102532 / B31) (Borrelia burgdorferi).